We begin with the raw amino-acid sequence, 954 residues long: Glycine dehydrogenase (decarboxylating) (954 aa).

N6-(pyridoxal phosphate)lysine is present on Lys704.

The protein belongs to the GcvP family. As to quaternary structure, the glycine cleavage system is composed of four proteins: P, T, L and H. Pyridoxal 5'-phosphate is required as a cofactor.

The catalysed reaction is N(6)-[(R)-lipoyl]-L-lysyl-[glycine-cleavage complex H protein] + glycine + H(+) = N(6)-[(R)-S(8)-aminomethyldihydrolipoyl]-L-lysyl-[glycine-cleavage complex H protein] + CO2. Functionally, the glycine cleavage system catalyzes the degradation of glycine. The P protein binds the alpha-amino group of glycine through its pyridoxal phosphate cofactor; CO(2) is released and the remaining methylamine moiety is then transferred to the lipoamide cofactor of the H protein. In Vibrio parahaemolyticus serotype O3:K6 (strain RIMD 2210633), this protein is Glycine dehydrogenase (decarboxylating).